Consider the following 254-residue polypeptide: Protein Thf1 (254 aa).

Residues glutamate 182–glutamine 241 are a coiled coil. Over residues glutamine 215–threonine 228 the composition is skewed to basic and acidic residues. The segment at glutamine 215–alanine 254 is disordered.

This sequence belongs to the THF1 family.

Functionally, may be involved in photosynthetic membrane biogenesis. In Picosynechococcus sp. (strain ATCC 27264 / PCC 7002 / PR-6) (Agmenellum quadruplicatum), this protein is Protein Thf1.